The chain runs to 642 residues: Threonine--tRNA ligase (642 aa).

The TGS domain maps to 1–61 (MPVITLPDGS…ENDATLSIIT (61 aa)). The interval 243–534 (DHRKIGKQLD…LTEEFAGFFP (292 aa)) is catalytic. Positions 334, 385, and 511 each coordinate Zn(2+).

This sequence belongs to the class-II aminoacyl-tRNA synthetase family. In terms of assembly, homodimer. It depends on Zn(2+) as a cofactor.

It localises to the cytoplasm. It catalyses the reaction tRNA(Thr) + L-threonine + ATP = L-threonyl-tRNA(Thr) + AMP + diphosphate + H(+). Catalyzes the attachment of threonine to tRNA(Thr) in a two-step reaction: L-threonine is first activated by ATP to form Thr-AMP and then transferred to the acceptor end of tRNA(Thr). Also edits incorrectly charged L-seryl-tRNA(Thr). This Salmonella agona (strain SL483) protein is Threonine--tRNA ligase.